Consider the following 206-residue polypeptide: ATP-dependent Clp protease proteolytic subunit (206 aa).

The Nucleophile role is filled by Ser-101. Residue His-126 is part of the active site.

It belongs to the peptidase S14 family. In terms of assembly, component of the chloroplastic Clp protease core complex.

The protein localises to the plastid. Its subcellular location is the chloroplast stroma. It catalyses the reaction Hydrolysis of proteins to small peptides in the presence of ATP and magnesium. alpha-casein is the usual test substrate. In the absence of ATP, only oligopeptides shorter than five residues are hydrolyzed (such as succinyl-Leu-Tyr-|-NHMec, and Leu-Tyr-Leu-|-Tyr-Trp, in which cleavage of the -Tyr-|-Leu- and -Tyr-|-Trp bonds also occurs).. In terms of biological role, cleaves peptides in various proteins in a process that requires ATP hydrolysis. Has a chymotrypsin-like activity. Plays a major role in the degradation of misfolded proteins. This Solanum lycopersicum (Tomato) protein is ATP-dependent Clp protease proteolytic subunit.